The following is a 105-amino-acid chain: Small ribosomal subunit protein uS10 (105 aa).

It belongs to the universal ribosomal protein uS10 family. As to quaternary structure, part of the 30S ribosomal subunit.

Its function is as follows. Involved in the binding of tRNA to the ribosomes. The chain is Small ribosomal subunit protein uS10 from Lachnoclostridium phytofermentans (strain ATCC 700394 / DSM 18823 / ISDg) (Clostridium phytofermentans).